A 189-amino-acid chain; its full sequence is UPF0301 protein PputW619_0469 (189 aa).

The protein belongs to the UPF0301 (AlgH) family.

The chain is UPF0301 protein PputW619_0469 from Pseudomonas putida (strain W619).